A 46-amino-acid polypeptide reads, in one-letter code: Iota-conotoxin RXIA (46 aa).

A 4-hydroxyproline; partial mark is found at P2 and P11. 4 disulfide bridges follow: C5–C19, C12–C22, C18–C27, and C21–C38. Residue P29 is modified to 4-hydroxyproline. Residue F44 is modified to D-phenylalanine.

Belongs to the conotoxin I1 superfamily. The natural D-Phe-44 form of the peptide is more potent than the L-Phe-44 form. As to expression, expressed by the venom duct.

It is found in the secreted. Its function is as follows. Iota-conotoxins bind to voltage-gated sodium channels and act as agonists by shifting the voltage-dependence of activation to more hyperpolarized levels. This toxin acts on Nav1.6/SCN8A &gt; Nav1.2/SCN2A &gt; Nav1.7/SCN9A sodium channels. Produces general excitatory symptoms upon intracorporeal injection and repetitive action potentials in the frog cutaneous pectoris muscle. Natural peptide (with D-Phe) is active on nerve, but not on muscle. Synthetic peptide (with L-Phe) is not active on both nerve and muscle. The chain is Iota-conotoxin RXIA from Conus radiatus (Rayed cone).